A 166-amino-acid polypeptide reads, in one-letter code: Ribosome maturation factor RimM (166 aa).

Residues 94-166 (EDEFYITDLN…AILNYKRDEL (73 aa)) enclose the PRC barrel domain.

It belongs to the RimM family. In terms of assembly, binds ribosomal protein uS19.

The protein localises to the cytoplasm. An accessory protein needed during the final step in the assembly of 30S ribosomal subunit, possibly for assembly of the head region. Essential for efficient processing of 16S rRNA. May be needed both before and after RbfA during the maturation of 16S rRNA. It has affinity for free ribosomal 30S subunits but not for 70S ribosomes. This Rickettsia bellii (strain RML369-C) protein is Ribosome maturation factor RimM.